Here is a 518-residue protein sequence, read N- to C-terminus: Probable alginate O-acetylase AlgI (518 aa).

The next 8 membrane-spanning stretches (helical) occupy residues 2–24, 39–61, 78–100, 115–137, 150–172, 319–341, 354–373, and 402–424; these read VFSSNVFLFMFLPIFLGLYYLSG, FYAWWRVDFLALFIGVTVWNYWI, WLLLGVIVDLCILGYFKYANFGV, FILTHVLLPIGISFYVFESISYI, NLIDFAAFVAIFPHLIAGPVLRF, GLWHGANVTYIIWGAWHGMWLAI, FNVIRWALTFLLVVIGWVIF, and ASLTGLQVATLVVAYATLAFFGL. The active site involves His-322. Positions 435 to 456 are disordered; sequence SGKSARADGPATEQPGTIKAVP. The helical transmembrane segment at 493 to 515 threads the bilayer; sequence LILLLFVASILKLSAQSFSPFLY.

The protein belongs to the membrane-bound acyltransferase family.

Its subcellular location is the cell inner membrane. It participates in glycan biosynthesis; alginate biosynthesis. Functionally, together with AlgJ and AlgF, forms an inner membrane complex which probably interacts with the alginate polymerization-transport complex and adds acetyl groups at the O-2 and O-3 positions of mannuronate residues. Acetylation of alginate is important for the architecture of biofilms and increases the ability of alginate to act as a defense barrier. The protein is Probable alginate O-acetylase AlgI (algI) of Pseudomonas syringae pv. tomato (strain ATCC BAA-871 / DC3000).